A 180-amino-acid chain; its full sequence is Thioredoxin 3 (180 aa).

Residues 1-3 (MAL) are Cytoplasmic-facing. The helical; Signal-anchor for type II membrane protein transmembrane segment at 4-24 (ICIGSVCFSLFHIGVIILLII) threads the bilayer. The Lumenal portion of the chain corresponds to 25–180 (NYFSSHIKKI…FQKYCLEKAK (156 aa)). A Thioredoxin domain is found at 29-176 (SHIKKIFPSF…IEKAFQKYCL (148 aa)). Active-site nucleophile residues include cysteine 99 and cysteine 102. The cysteines at positions 99 and 102 are disulfide-linked.

Belongs to the thioredoxin family. Post-translationally, the disulfide bond between Cys-99 and Cys-102 acts as a redox-active center and is reduced by thioredoxin reductase TRXR.

Its subcellular location is the endoplasmic reticulum membrane. Participates in various redox reactions through the reversible oxidation of its active center dithiol to a disulfide and catalyzes dithiol-disulfide exchange reactions. The chain is Thioredoxin 3 from Plasmodium falciparum (isolate 3D7).